We begin with the raw amino-acid sequence, 505 residues long: Proton-coupled zinc antiporter SLC30A1 (505 aa).

The Cytoplasmic segment spans residues 1 to 10; the sequence is MGCWGRNRGR. The helical transmembrane segment at 11–31 threads the bilayer; the sequence is LLCMLALTFMFMVLEVVVSRV. Residues 32-35 are Extracellular-facing; the sequence is TSSL. A helical membrane pass occupies residues 36–56; it reads AMLSDSFHMLSDVLALVVALV. Zn(2+)-binding residues include histidine 43 and aspartate 47. The Cytoplasmic segment spans residues 57–80; that stretch reads AERFARRTHATQKNTFGWIRAEVM. A helical membrane pass occupies residues 81-101; sequence GALVNAIFLTGLCFAILLEAI. Residues 102–113 are Extracellular-facing; it reads ERFVEPHEMQQP. The helical transmembrane segment at 114 to 134 threads the bilayer; that stretch reads LVVLGVGVAGLLVNVLGLCLF. Topologically, residues 135 to 246 are cytoplasmic; that stretch reads HHHSGFSQDS…RAGQLNMRGV (112 aa). The segment at 142-215 is disordered; that stretch reads QDSGHSHSHG…DPEKPRSGDT (74 aa). Polar residues predominate over residues 187–199; sequence TNTLVANTSNSNG. Over residues 203–214 the composition is skewed to basic and acidic residues; it reads DPADPEKPRSGD. A helical transmembrane segment spans residues 247 to 267; that stretch reads FLHVLGDALGSVIVVVNALVF. Zn(2+)-binding residues include histidine 249 and aspartate 253. At 268–306 the chain is on the extracellular side; sequence YFSWKGCSEGDFCVNPCFPDPCKAFVEIINSTHASVYEA. Residue asparagine 297 is glycosylated (N-linked (GlcNAc...) asparagine). A helical membrane pass occupies residues 307–327; the sequence is GPCWVLYLDPTLCVVMVCILL. The Cytoplasmic segment spans residues 328 to 505; the sequence is YTTYPLLKES…MPNKQPESSL (178 aa). Serine 504 carries the phosphoserine modification.

It belongs to the cation diffusion facilitator (CDF) transporter (TC 2.A.4) family. SLC30A subfamily. In terms of assembly, homodimer. Interacts with TMEM163. Interacts and forms a complex with TMC6 and TMC8; the interaction regulates zinc transport into the ER.

The protein resides in the cell membrane. Its subcellular location is the basolateral cell membrane. It localises to the cytoplasmic vesicle membrane. It is found in the cytoplasm. The protein localises to the endoplasmic reticulum membrane. The protein resides in the golgi apparatus membrane. Its subcellular location is the nucleus membrane. The catalysed reaction is Zn(2+)(in) + 2 H(+)(out) = Zn(2+)(out) + 2 H(+)(in). Functionally, zinc ion:proton antiporter that could function at the plasma membrane mediating zinc efflux from cells against its electrochemical gradient protecting them from intracellular zinc accumulation and toxicity. Alternatively, could prevent the transport to the plasma membrane of CACNB2, the L-type calcium channels regulatory subunit, through a yet to be defined mechanism. By modulating the expression of these channels at the plasma membrane, could prevent calcium and zinc influx into cells. By the same mechanism, could also prevent L-type calcium channels-mediated heavy metal influx into cells. In some cells, could also function as a zinc ion:proton antiporter mediating zinc entry into the lumen of cytoplasmic vesicles. In macrophages, can increase zinc ions concentration into the lumen of cytoplasmic vesicles containing engulfed bacteria and could help inactivate them. Forms a complex with TMC6/EVER1 and TMC8/EVER2 at the ER membrane of keratynocytes which facilitates zinc uptake into the ER. Down-regulates the activity of transcription factors induced by zinc and cytokines. The sequence is that of Proton-coupled zinc antiporter SLC30A1 from Macaca fascicularis (Crab-eating macaque).